Reading from the N-terminus, the 130-residue chain is Fumarate reductase subunit C (130 aa).

Transmembrane regions (helical) follow at residues 34–54, 60–80, and 109–129; these read VPAVWFSIVLIYGVFALKGGV, FVGFLQNPLVLLINFVALLAA, and IVKTLWAVTVVASVVILAVAL.

Belongs to the FrdC family. Part of an enzyme complex containing four subunits: a flavoprotein (FrdA), an iron-sulfur protein (FrdB), and two hydrophobic anchor proteins (FrdC and FrdD).

It localises to the cell inner membrane. In terms of biological role, two distinct, membrane-bound, FAD-containing enzymes are responsible for the catalysis of fumarate and succinate interconversion; fumarate reductase is used in anaerobic growth, and succinate dehydrogenase is used in aerobic growth. Anchors the catalytic components of the fumarate reductase complex to the cell inner membrane, binds quinones. The chain is Fumarate reductase subunit C from Serratia proteamaculans (strain 568).